We begin with the raw amino-acid sequence, 365 residues long: NADH-quinone oxidoreductase subunit H (365 aa).

Transmembrane regions (helical) follow at residues 27-47, 99-119, 133-153, 168-188, 206-226, 268-288, 294-314, and 329-349; these read LLLI…LTFA, FLFL…WAVV, ALLY…IAGW, AAQV…VLMM, FLNW…ISGV, ILVA…PVDI, IPGV…FLWF, and LGWK…GAVM.

It belongs to the complex I subunit 1 family. In terms of assembly, NDH-1 is composed of 14 different subunits. Subunits NuoA, H, J, K, L, M, N constitute the membrane sector of the complex.

Its subcellular location is the cell inner membrane. The enzyme catalyses a quinone + NADH + 5 H(+)(in) = a quinol + NAD(+) + 4 H(+)(out). Its function is as follows. NDH-1 shuttles electrons from NADH, via FMN and iron-sulfur (Fe-S) centers, to quinones in the respiratory chain. The immediate electron acceptor for the enzyme in this species is believed to be ubiquinone. Couples the redox reaction to proton translocation (for every two electrons transferred, four hydrogen ions are translocated across the cytoplasmic membrane), and thus conserves the redox energy in a proton gradient. This subunit may bind ubiquinone. In Nitrosomonas eutropha (strain DSM 101675 / C91 / Nm57), this protein is NADH-quinone oxidoreductase subunit H.